Consider the following 224-residue polypeptide: Putative O-methyltransferase MMAR_4217 (224 aa).

The segment covering 1–11 (MHGTDSSSDTP) has biased composition (polar residues). The tract at residues 1–20 (MHGTDSSSDTPGQPAPSRAE) is disordered. S-adenosyl-L-methionine is bound by residues valine 51, glutamate 73, 75–76 (GT), serine 81, aspartate 99, and isoleucine 100. Residue aspartate 147 participates in substrate binding. Aspartate 149 serves as a coordination point for S-adenosyl-L-methionine.

Belongs to the class I-like SAM-binding methyltransferase superfamily. Cation-dependent O-methyltransferase family.

The polypeptide is Putative O-methyltransferase MMAR_4217 (Mycobacterium marinum (strain ATCC BAA-535 / M)).